The sequence spans 108 residues: Probable 4-amino-4-deoxy-L-arabinose-phosphoundecaprenol flippase subunit ArnE (108 aa).

Helical transmembrane passes span 32 to 52 (PLLL…LVWL), 58 to 78 (VPVG…TLAA), and 85 to 105 (TLSL…AIMG). The 73-residue stretch at 34 to 106 (LLWLGGSVLL…IVAGVAIMGS (73 aa)) folds into the EamA domain.

Belongs to the ArnE family. As to quaternary structure, heterodimer of ArnE and ArnF.

The protein resides in the cell inner membrane. Its pathway is bacterial outer membrane biogenesis; lipopolysaccharide biosynthesis. Translocates 4-amino-4-deoxy-L-arabinose-phosphoundecaprenol (alpha-L-Ara4N-phosphoundecaprenol) from the cytoplasmic to the periplasmic side of the inner membrane. This is Probable 4-amino-4-deoxy-L-arabinose-phosphoundecaprenol flippase subunit ArnE from Erwinia tasmaniensis (strain DSM 17950 / CFBP 7177 / CIP 109463 / NCPPB 4357 / Et1/99).